The primary structure comprises 397 residues: Acetate kinase (397 aa).

Asn-8 is a Mg(2+) binding site. Lys-15 lines the ATP pocket. Arg-89 contacts substrate. Asp-146 acts as the Proton donor/acceptor in catalysis. ATP contacts are provided by residues 206–210 (HLGNG), 281–283 (DLR), and 329–333 (GIGEN). Position 382 (Glu-382) interacts with Mg(2+).

It belongs to the acetokinase family. Homodimer. The cofactor is Mg(2+). It depends on Mn(2+) as a cofactor.

Its subcellular location is the cytoplasm. It carries out the reaction acetate + ATP = acetyl phosphate + ADP. The protein operates within metabolic intermediate biosynthesis; acetyl-CoA biosynthesis; acetyl-CoA from acetate: step 1/2. Catalyzes the formation of acetyl phosphate from acetate and ATP. Can also catalyze the reverse reaction. The sequence is that of Acetate kinase from Bacillus cytotoxicus (strain DSM 22905 / CIP 110041 / 391-98 / NVH 391-98).